The sequence spans 394 residues: Elongation factor Tu (394 aa).

The region spanning 10–204 is the tr-type G domain; that stretch reads KPHVNVGTIG…ALDSYIPEPQ (195 aa). The G1 stretch occupies residues 19–26; sequence GHVDHGKT. Residue 19 to 26 participates in GTP binding; sequence GHVDHGKT. Residue Thr-26 coordinates Mg(2+). Residues 60-64 are G2; the sequence is GITIN. A G3 region spans residues 81–84; that stretch reads DCPG. Residues 81–85 and 136–139 each bind GTP; these read DCPGH and NKCD. The interval 136-139 is G4; it reads NKCD. A G5 region spans residues 174–176; that stretch reads SAL.

The protein belongs to the TRAFAC class translation factor GTPase superfamily. Classic translation factor GTPase family. EF-Tu/EF-1A subfamily. In terms of assembly, monomer.

The protein resides in the cytoplasm. It carries out the reaction GTP + H2O = GDP + phosphate + H(+). Functionally, GTP hydrolase that promotes the GTP-dependent binding of aminoacyl-tRNA to the A-site of ribosomes during protein biosynthesis. The chain is Elongation factor Tu from Shewanella putrefaciens (Pseudomonas putrefaciens).